Here is a 102-residue protein sequence, read N- to C-terminus: ATP-dependent Clp protease adapter protein ClpS (102 aa).

It belongs to the ClpS family. As to quaternary structure, binds to the N-terminal domain of the chaperone ClpA.

Involved in the modulation of the specificity of the ClpAP-mediated ATP-dependent protein degradation. This Shewanella baltica (strain OS155 / ATCC BAA-1091) protein is ATP-dependent Clp protease adapter protein ClpS.